A 198-amino-acid polypeptide reads, in one-letter code: 3-isopropylmalate dehydratase small subunit (198 aa).

Belongs to the LeuD family. LeuD type 1 subfamily. As to quaternary structure, heterodimer of LeuC and LeuD.

The catalysed reaction is (2R,3S)-3-isopropylmalate = (2S)-2-isopropylmalate. The protein operates within amino-acid biosynthesis; L-leucine biosynthesis; L-leucine from 3-methyl-2-oxobutanoate: step 2/4. In terms of biological role, catalyzes the isomerization between 2-isopropylmalate and 3-isopropylmalate, via the formation of 2-isopropylmaleate. This chain is 3-isopropylmalate dehydratase small subunit, found in Mycolicibacterium paratuberculosis (strain ATCC BAA-968 / K-10) (Mycobacterium paratuberculosis).